A 216-amino-acid chain; its full sequence is Sugar fermentation stimulation protein homolog (216 aa).

Belongs to the SfsA family.

The polypeptide is Sugar fermentation stimulation protein homolog (Thermoplasma volcanium (strain ATCC 51530 / DSM 4299 / JCM 9571 / NBRC 15438 / GSS1)).